The sequence spans 372 residues: uncharacterized protein (372 aa).

Positions 1 to 24 (MSYYQIIVCILASISYIILLEVIA) are cleaved as a signal peptide. Residues 92–215 (PNRNDTDASY…SSYNLLWSDL (124 aa)) enclose the PA domain. A helical membrane pass occupies residues 236–256 (FWPFLLCFSPSIIMLITVQAL). Phosphoserine is present on S280. The RING-type; atypical zinc finger occupies 321–363 (CVICLESFTKGDKVVALPCKHEFHRPCIAKWIVDYRHACPTCN).

The protein resides in the golgi apparatus membrane. It is found in the vacuole membrane. This is an uncharacterized protein from Schizosaccharomyces pombe (strain 972 / ATCC 24843) (Fission yeast).